Here is a 745-residue protein sequence, read N- to C-terminus: Probable GMP synthase [glutamine-hydrolyzing] (745 aa).

A disordered region spans residues 1–37 (MKRSSSMLDINEDSQHSTNKAPPPKKAPEDRFDSANM). Residues 60–252 (RIAILDFGAQ…LFKVVGCCGN (193 aa)) form the Glutamine amidotransferase type-1 domain. C138 serves as the catalytic For GATase activity. Catalysis depends on residues H226 and E228. The GMPS ATP-PPase domain occupies 253-461 (FTIQNREQSC…LGLPESIVQR (209 aa)). An ATP-binding site is contributed by 280 to 286 (SGGVDSA). Residues R363, D563, Q662, K737, and E743 each coordinate substrate.

Homodimer.

The catalysed reaction is XMP + L-glutamine + ATP + H2O = GMP + L-glutamate + AMP + diphosphate + 2 H(+). It functions in the pathway purine metabolism; GMP biosynthesis; GMP from XMP (L-Gln route): step 1/1. The protein is Probable GMP synthase [glutamine-hydrolyzing] (gmps-1) of Caenorhabditis elegans.